The following is a 119-amino-acid chain: Beta-2-microglobulin (119 aa).

The N-terminal stretch at 1 to 20 (MVCSVVVALLALLSLSGLEA) is a signal peptide. The Ig-like C1-type domain occupies 25 to 114 (PKIQVYSRHP…VTFSTPKTVK (90 aa)). Cysteine 45 and cysteine 100 are oxidised to a cystine.

It belongs to the beta-2-microglobulin family. In terms of assembly, heterodimer of an alpha chain and a beta chain. Beta-2-microglobulin is the beta-chain of major histocompatibility complex class I molecules.

It is found in the secreted. Its function is as follows. Component of the class I major histocompatibility complex (MHC). Involved in the presentation of peptide antigens to the immune system. The polypeptide is Beta-2-microglobulin (B2M) (Cebuella pygmaea (Pygmy marmoset)).